We begin with the raw amino-acid sequence, 108 residues long: MSDIFRFDTEEQTLTKEKVKLKRPSKYRVIILNDDFTPMEFVVWILQFVFHRSRAQSQQIMLKAHITGKALCGVYSHDVARTKVIQVQQLAEQHGYPLHCTMEVEEES.

It belongs to the ClpS family. Binds to the N-terminal domain of the chaperone ClpA.

Its function is as follows. Involved in the modulation of the specificity of the ClpAP-mediated ATP-dependent protein degradation. This is ATP-dependent Clp protease adapter protein ClpS from Leptospira borgpetersenii serovar Hardjo-bovis (strain JB197).